Here is a 221-residue protein sequence, read N- to C-terminus: Ribosomal RNA large subunit methyltransferase E (221 aa).

5 residues coordinate S-adenosyl-L-methionine: G60, W62, D89, D105, and D134. The active-site Proton acceptor is the K174.

This sequence belongs to the class I-like SAM-binding methyltransferase superfamily. RNA methyltransferase RlmE family.

Its subcellular location is the cytoplasm. The catalysed reaction is uridine(2552) in 23S rRNA + S-adenosyl-L-methionine = 2'-O-methyluridine(2552) in 23S rRNA + S-adenosyl-L-homocysteine + H(+). Specifically methylates the uridine in position 2552 of 23S rRNA at the 2'-O position of the ribose in the fully assembled 50S ribosomal subunit. This Cupriavidus taiwanensis (strain DSM 17343 / BCRC 17206 / CCUG 44338 / CIP 107171 / LMG 19424 / R1) (Ralstonia taiwanensis (strain LMG 19424)) protein is Ribosomal RNA large subunit methyltransferase E.